A 92-amino-acid chain; its full sequence is CRISPR-associated endoribonuclease Cas2 1 (92 aa).

Aspartate 10 serves as a coordination point for Mg(2+).

The protein belongs to the CRISPR-associated endoribonuclease Cas2 protein family. In terms of assembly, homodimer, forms a heterotetramer with a Cas1 homodimer. Requires Mg(2+) as cofactor.

Its function is as follows. CRISPR (clustered regularly interspaced short palindromic repeat), is an adaptive immune system that provides protection against mobile genetic elements (viruses, transposable elements and conjugative plasmids). CRISPR clusters contain sequences complementary to antecedent mobile elements and target invading nucleic acids. CRISPR clusters are transcribed and processed into CRISPR RNA (crRNA). Functions as a ssRNA-specific endoribonuclease. Involved in the integration of spacer DNA into the CRISPR cassette. The polypeptide is CRISPR-associated endoribonuclease Cas2 1 (Thermodesulfovibrio yellowstonii (strain ATCC 51303 / DSM 11347 / YP87)).